The chain runs to 164 residues: Lipocalin-like 1 protein (164 aa).

This sequence belongs to the calycin superfamily. Lipocalin family.

This chain is Lipocalin-like 1 protein (LCNL1), found in Homo sapiens (Human).